A 354-amino-acid chain; its full sequence is MSETTDYGASNTGANEESLRMVSSQPIGNEPVSDEELRPHVLGGFIGQPRLKAQLQLFLDAARKRDVPPDHILLAGPPGLGKTTLAMIVANELEVPIRVTSGPAVQHAGDLASILSSLDVGEVLFIDEIHRLPRAAEELLYIAMEDFRVDVMVGKGPGASSIPLTLPRFTVIGATTREGMLPSPLRARFGFTAHLDFYPHEELEKLIERSANVLGVNLDTGSAHELALRSRGTPRIANRLLRRVRDWAIVHDLIVVRPDDVKEALALYQIDSEGLDRLDIAVLNAIVRNFNGGPVGLNNLAAMVGEESETVETVCEPYLVREGFMIRTPKGRVATEKAWQHLGITPKDDVSKLF.

A large ATPase domain (RuvB-L) region spans residues 4–198; the sequence is TTDYGASNTG…FGFTAHLDFY (195 aa). ATP is bound by residues leucine 37, arginine 38, glycine 79, lysine 82, threonine 83, threonine 84, 145 to 147, arginine 188, tyrosine 198, and arginine 235; that span reads EDF. Threonine 83 contacts Mg(2+). A small ATPAse domain (RuvB-S) region spans residues 199 to 269; sequence PHEELEKLIE…DVKEALALYQ (71 aa). Positions 272 to 354 are head domain (RuvB-H); the sequence is SEGLDRLDIA…TPKDDVSKLF (83 aa). Positions 327 and 332 each coordinate DNA.

It belongs to the RuvB family. As to quaternary structure, homohexamer. Forms an RuvA(8)-RuvB(12)-Holliday junction (HJ) complex. HJ DNA is sandwiched between 2 RuvA tetramers; dsDNA enters through RuvA and exits via RuvB. An RuvB hexamer assembles on each DNA strand where it exits the tetramer. Each RuvB hexamer is contacted by two RuvA subunits (via domain III) on 2 adjacent RuvB subunits; this complex drives branch migration. In the full resolvosome a probable DNA-RuvA(4)-RuvB(12)-RuvC(2) complex forms which resolves the HJ.

The protein localises to the cytoplasm. The enzyme catalyses ATP + H2O = ADP + phosphate + H(+). In terms of biological role, the RuvA-RuvB-RuvC complex processes Holliday junction (HJ) DNA during genetic recombination and DNA repair, while the RuvA-RuvB complex plays an important role in the rescue of blocked DNA replication forks via replication fork reversal (RFR). RuvA specifically binds to HJ cruciform DNA, conferring on it an open structure. The RuvB hexamer acts as an ATP-dependent pump, pulling dsDNA into and through the RuvAB complex. RuvB forms 2 homohexamers on either side of HJ DNA bound by 1 or 2 RuvA tetramers; 4 subunits per hexamer contact DNA at a time. Coordinated motions by a converter formed by DNA-disengaged RuvB subunits stimulates ATP hydrolysis and nucleotide exchange. Immobilization of the converter enables RuvB to convert the ATP-contained energy into a lever motion, pulling 2 nucleotides of DNA out of the RuvA tetramer per ATP hydrolyzed, thus driving DNA branch migration. The RuvB motors rotate together with the DNA substrate, which together with the progressing nucleotide cycle form the mechanistic basis for DNA recombination by continuous HJ branch migration. Branch migration allows RuvC to scan DNA until it finds its consensus sequence, where it cleaves and resolves cruciform DNA. In Bifidobacterium longum (strain NCC 2705), this protein is Holliday junction branch migration complex subunit RuvB.